The sequence spans 498 residues: MEPLQRKSELDFQSYRKMPLAQQRTQRLKPTSPEELHDLICVGFGPASLAIAIALHDALDPCLNKCAPTSGWQPKVAFLERQKQFAWHSGMLVPGSRMQISFIKDLATLRDPRSSFTFLNYLHQKDRLIHFTNLSTFLPARMEFEDYMRWCANQFSDVVTYGEEVIEVLPGKSSPDSPVVDYFTVLSRNVETGEISSRSARKVVLALGGTAKLPAELPQDPRIMHSSKYCTALPNLLKDNNEPYNIAVLGSGQSAAEIFHDLQKRYPNSRTSLIMRDTAMRPSDDSPFVNEVFNPERTDKFYNLSAAERERSLKADKATNYSVVRLELIEEIYHDMYLQRVKNPDETQWQHRILPSRKITRVEHYGPNKRMRVHVRAVKDGKDSLIGDGKEVLEVDALMVATGYNRNAHEQLLSKVQYLRPATQDRWTPSRDYRVDLDRSKVSAGAGIWLQGSNEQTHGLSDSLLSVLATRGGEMVESIFGEQLESAAVPDTRFRAML.

FAD contacts are provided by residues 80–88 (ERQKQFAWH) and Q99. Residue K104 coordinates substrate. Residue V165 participates in FAD binding. Residues 251–254 (SGQS) and R276 each bind NADP(+). Substrate contacts are provided by residues 290–293 (NEVF) and N320. 320 to 322 (NYS) is an NADP(+) binding site. FAD is bound at residue 463–465 (SLL). Residue S466 coordinates substrate.

It belongs to the lysine N(6)-hydroxylase/L-ornithine N(5)-oxygenase family. As to quaternary structure, homotetramer. It depends on FAD as a cofactor.

The enzyme catalyses L-ornithine + NADPH + O2 = N(5)-hydroxy-L-ornithine + NADP(+) + H2O. It carries out the reaction L-ornithine + NADH + O2 = N(5)-hydroxy-L-ornithine + NAD(+) + H2O. It functions in the pathway siderophore biosynthesis. Functionally, catalyzes the conversion of L-ornithine to N(5)-hydroxyornithine, the first step in the biosynthesis of all hydroxamate-containing siderophores, such as the secreted triacetylfusarinine C (TAFC) involved in iron uptake and the intracellular iron storage compound desferriferricrocin (DFFC). In Emericella nidulans (strain FGSC A4 / ATCC 38163 / CBS 112.46 / NRRL 194 / M139) (Aspergillus nidulans), this protein is L-ornithine N(5)-monooxygenase.